The chain runs to 313 residues: tRNA dimethylallyltransferase (313 aa).

10–17 lines the ATP pocket; it reads GPTASGKT. 12–17 is a substrate binding site; sequence TASGKT. 3 interaction with substrate tRNA regions span residues 35–38, 159–163, and 240–245; these read DSAM, QRIQR, and RCVGYR.

Belongs to the IPP transferase family. In terms of assembly, monomer. Mg(2+) serves as cofactor.

It catalyses the reaction adenosine(37) in tRNA + dimethylallyl diphosphate = N(6)-dimethylallyladenosine(37) in tRNA + diphosphate. In terms of biological role, catalyzes the transfer of a dimethylallyl group onto the adenine at position 37 in tRNAs that read codons beginning with uridine, leading to the formation of N6-(dimethylallyl)adenosine (i(6)A). In Legionella pneumophila subsp. pneumophila (strain Philadelphia 1 / ATCC 33152 / DSM 7513), this protein is tRNA dimethylallyltransferase.